The chain runs to 1073 residues: Pleckstrin homology domain-containing family G member 5 (1073 aa).

Disordered regions lie at residues methionine 1–leucine 28, valine 91–arginine 135, proline 217–leucine 261, glycine 278–glutamate 309, and serine 367–aspartate 388. Basic and acidic residues-rich tracts occupy residues proline 217 to lysine 231 and glutamate 249 to serine 260. Residues serine 367–serine 381 show a composition bias toward acidic residues. A DH domain is found at histidine 406 to cysteine 598. Positions glutamine 654–asparagine 754 constitute a PH domain. Disordered regions lie at residues glutamine 762–glycine 818, threonine 833–aspartate 873, and proline 899–glutamine 925. The span at leucine 777–glutamate 790 shows a compositional bias: acidic residues. Polar residues-rich tracts occupy residues serine 791 to leucine 809 and valine 844 to serine 864. Threonine 793 bears the Phosphothreonine mark. Serine 798 is subject to Phosphoserine. Residues valine 900 to serine 915 are compositionally biased toward pro residues. Threonine 909 carries the phosphothreonine modification. Residues serine 911, serine 936, and serine 941 each carry the phosphoserine modification. The tract at residues methionine 993–glutamine 1046 is disordered. A compositionally biased stretch (polar residues) spans glycine 1030 to proline 1039.

In terms of assembly, interacts with GIPC1/synectin and RHOA. In terms of tissue distribution, expressed in neurons and glial cells of the peripheral nervous system, with highest levels of expression in the brain and sciatic nerve endoneurium. Isoform 2 is expressed at detectable levels only in malignant cells.

It is found in the cytoplasm. It localises to the perinuclear region. The protein resides in the cell membrane. The protein localises to the cell junction. Its subcellular location is the cell projection. It is found in the lamellipodium. Functionally, functions as a guanine exchange factor (GEF) for RAB26 and thus regulates autophagy of synaptic vesicles in axon terminal of motoneurons. Involved in the control of neuronal cell differentiation. Plays a role in angiogenesis through regulation of endothelial cells chemotaxis. Also affects the migration, adhesion, and matrix/bone degradation in macrophages and osteoclasts. This is Pleckstrin homology domain-containing family G member 5 (Plekhg5) from Mus musculus (Mouse).